The following is a 467-amino-acid chain: Glutamate--tRNA ligase 2 (467 aa).

The short motif at 18 to 28 (PSPTGYLHVGG) is the 'HIGH' region element. The 'KMSKS' region signature appears at 238–242 (PLSKR). Residue Lys-241 participates in ATP binding.

It belongs to the class-I aminoacyl-tRNA synthetase family. Glutamate--tRNA ligase type 1 subfamily. In terms of assembly, monomer.

The protein localises to the cytoplasm. It carries out the reaction tRNA(Glu) + L-glutamate + ATP = L-glutamyl-tRNA(Glu) + AMP + diphosphate. Its function is as follows. Catalyzes the attachment of glutamate to tRNA(Glu) in a two-step reaction: glutamate is first activated by ATP to form Glu-AMP and then transferred to the acceptor end of tRNA(Glu). This Fervidobacterium nodosum (strain ATCC 35602 / DSM 5306 / Rt17-B1) protein is Glutamate--tRNA ligase 2.